Consider the following 309-residue polypeptide: Sulfate adenylyltransferase subunit 2 (309 aa).

This sequence belongs to the PAPS reductase family. CysD subfamily. As to quaternary structure, heterodimer composed of CysD, the smaller subunit, and CysN.

It catalyses the reaction sulfate + ATP + H(+) = adenosine 5'-phosphosulfate + diphosphate. Its pathway is sulfur metabolism; hydrogen sulfide biosynthesis; sulfite from sulfate: step 1/3. With CysN forms the ATP sulfurylase (ATPS) that catalyzes the adenylation of sulfate producing adenosine 5'-phosphosulfate (APS) and diphosphate, the first enzymatic step in sulfur assimilation pathway. APS synthesis involves the formation of a high-energy phosphoric-sulfuric acid anhydride bond driven by GTP hydrolysis by CysN coupled to ATP hydrolysis by CysD. The polypeptide is Sulfate adenylyltransferase subunit 2 (Methylorubrum populi (strain ATCC BAA-705 / NCIMB 13946 / BJ001) (Methylobacterium populi)).